Consider the following 492-residue polypeptide: Heat shock factor protein 4 (492 aa).

Residues 17–121 mediate DNA binding; that stretch reads VPAFLGKLWA…QLLERVRRKV (105 aa). The tract at residues 129-203 is hydrophobic repeat HR-A/B; it reads GRWRPEDLGR…GPLQTGSSGA (75 aa). The interval 245–323 is interactions with DUSP26, MAPK1 and MAPK2; it reads LPETTLGLSS…ECDFCVTAPP (79 aa). The segment at 250–286 is disordered; the sequence is LGLSSSHRTRGPIISDIHEDSPSPDGTRLSPSSGGRR. Residue K294 forms a Glycyl lysine isopeptide (Lys-Gly) (interchain with G-Cter in SUMO) linkage. S299 carries the phosphoserine modification. The tract at residues 337–378 is disordered; it reads KGNFSPEGPRNAQQPEPRGPREVPDRGTLGLDRGARSPENLL. Residues 365-390 are hydrophobic repeat HR-C; the sequence is LGLDRGARSPENLLPPMLLRAPPESV.

This sequence belongs to the HSF family. As to quaternary structure, homotrimer. Exhibits constitutive DNA binding and forms trimers even in the absence of stress. Interacts with ALKBH4, DUSP26, MAPK1, MAPK2, MAPK8 and MAP kinase p38. Phosphorylated mainly on serine residues. Phosphorylation on Ser-299 promotes sumoylation on Lys-294. Post-translationally, constitutively sumoylated. Sumoylation represses the transcriptional activity and is promoted by phosphorylation on Ser-299.

It localises to the nucleus. Its function is as follows. Heat-shock transcription factor that specifically binds heat shock promoter elements (HSE). Required for denucleation and organelle rupture and degradation that occur during eye lens terminal differentiation, when fiber cells that compose the lens degrade all membrane-bound organelles in order to provide lens with transparency to allow the passage of light. In this process, may regulate denucleation of lens fiber cells in part by activating DNASE2B transcription. May be involved in DNA repair through the transcriptional regulation of RAD51. May up-regulate p53/TP53 protein in eye lens fiber cells, possibly through protein stabilization. In the eye lens, controls the expression of alpha-crystallin B chain/CRYAB and consequently may be involved in the regulation of lysosomal acidification. The polypeptide is Heat shock factor protein 4 (HSF4) (Canis lupus familiaris (Dog)).